A 276-amino-acid chain; its full sequence is Pantothenate synthetase (276 aa).

26-33 lines the ATP pocket; the sequence is MGFLHEGH. The Proton donor role is filled by His33. Gln57 lines the (R)-pantoate pocket. Gln57 lines the beta-alanine pocket. Residue 142–145 participates in ATP binding; that stretch reads GLKD. Gln148 contacts (R)-pantoate. ATP-binding positions include Ile171 and 179–182; that span reads KSSR.

The protein belongs to the pantothenate synthetase family. As to quaternary structure, homodimer.

It localises to the cytoplasm. The enzyme catalyses (R)-pantoate + beta-alanine + ATP = (R)-pantothenate + AMP + diphosphate + H(+). Its pathway is cofactor biosynthesis; (R)-pantothenate biosynthesis; (R)-pantothenate from (R)-pantoate and beta-alanine: step 1/1. Functionally, catalyzes the condensation of pantoate with beta-alanine in an ATP-dependent reaction via a pantoyl-adenylate intermediate. In Exiguobacterium sibiricum (strain DSM 17290 / CCUG 55495 / CIP 109462 / JCM 13490 / 255-15), this protein is Pantothenate synthetase.